A 192-amino-acid polypeptide reads, in one-letter code: Peptidyl-tRNA hydrolase (192 aa).

Y16 provides a ligand contact to tRNA. The active-site Proton acceptor is H21. Y66 and N68 together coordinate tRNA.

This sequence belongs to the PTH family. Monomer.

The protein localises to the cytoplasm. It carries out the reaction an N-acyl-L-alpha-aminoacyl-tRNA + H2O = an N-acyl-L-amino acid + a tRNA + H(+). Hydrolyzes ribosome-free peptidyl-tRNAs (with 1 or more amino acids incorporated), which drop off the ribosome during protein synthesis, or as a result of ribosome stalling. In terms of biological role, catalyzes the release of premature peptidyl moieties from peptidyl-tRNA molecules trapped in stalled 50S ribosomal subunits, and thus maintains levels of free tRNAs and 50S ribosomes. The polypeptide is Peptidyl-tRNA hydrolase (Aquifex aeolicus (strain VF5)).